A 702-amino-acid chain; its full sequence is MQHVTRTLVTTALPYANGPVHLGHLAGVYLPADIYVRYKRMKGEDVIHIGGSDEHGVPITITAEKEGISPQDVVDRYHRMNSEAFRKCGISFDYYGRTSSQGHHDTAKEFFLEIERKGIFRRKTEKLFFDAKAERFLSDRYVTGTCPICNNPEANGDQCEQCGTHLSPTELLNPKSKLSDATPELRDTMHWYFPLGRFQEALEAYVASHEHDWRPNVVNYTRTWLKQGLNDRAITRDLSWGIQVPLDDPEACGKVLYVWFDAVLGYISFTRQWAAEAGDESLWRAYWQDPESRVVNFIGKDNVVFHTLMFPAILMAWNEGRQSGIYNLADNVPASEFMNFEGRKFSKSRNYAVYLGEFLEKFPADTLRYSIAMNYPENKDTDFSWQDFQNRTNGELADTLGNFIKRSVDFTNSRFDGVVPFSCTDDDWNVLGIDWSQTIEKLDQAYEQFHIRETASLGMDIARSANRFLTESEPWKVIKTDREAAAKTMALSLNLCYALAITLYPVIPETAGRIYAMLGFEGSIDARIKRGVSAIEELLAPQLHKGHRIRKESEILFTKIEDADIEPELKKIEKLLADAEKLEAAALSQEMTFKPEISFDDFLKVDLRVATVLGAEKVKKAGKLLKLQLKVGTEARQVLAGIAQFYSPEEMVGKQVVLVANLAERTIRGEISQGMILAVEGADGRLCVVEPVGDEINGQQIQ.

The 'HIGH' region signature appears at 14-24 (PYANGPVHLGH). The Zn(2+) site is built by C146, C149, C159, and C162. The short motif at 344–348 (KFSKS) is the 'KMSKS' region element. K347 contacts ATP. The region spanning 601-702 (DFLKVDLRVA…GDEINGQQIQ (102 aa)) is the tRNA-binding domain.

Belongs to the class-I aminoacyl-tRNA synthetase family. MetG type 1 subfamily. Homodimer. The cofactor is Zn(2+).

It localises to the cytoplasm. The enzyme catalyses tRNA(Met) + L-methionine + ATP = L-methionyl-tRNA(Met) + AMP + diphosphate. Its function is as follows. Is required not only for elongation of protein synthesis but also for the initiation of all mRNA translation through initiator tRNA(fMet) aminoacylation. This is Methionine--tRNA ligase from Chlorobium limicola (strain DSM 245 / NBRC 103803 / 6330).